The following is a 1147-amino-acid chain: PDZ domain-containing protein 8 (1147 aa).

Residues 2 to 24 (GLLLLILASAVLGSFLTLLAQFL) traverse the membrane as a helical segment. Residues 87–293 (APPTLETCYF…LPSYKIRFKP (207 aa)) form the SMP-LTD domain. Positions 365 to 448 (TVELIKGNLQ…RVLVYYQRPA (84 aa)) constitute a PDZ domain. Phosphoserine is present on residues Ser490, Ser515, and Ser532. Residues 504–673 (ELKEETQPLS…DSSDDPQMWE (170 aa)) form a disordered region. The segment covering 510-524 (QPLSHSPKRTPTTLS) has biased composition (polar residues). Polar residues predominate over residues 557–576 (KPSTLKTSETTEAAQVSKPQ). Residues 580–596 (FKPPVPPRPQGRVPLPP) are compositionally biased toward pro residues. The Phorbol-ester/DAG-type zinc-finger motif lies at 833-884 (KHSFQDTQFQNPTWCDYCKKKVWTKAASQCMFCAYVCHKKCQEKCLAETPLC). The segment at 948 to 990 (RLSEPGTDLVEPSPKHTPNTSDNEGSDTEVCGSNSPSKRGNSA) is disordered. Residues Ser960 and Ser973 each carry the phosphoserine modification. The span at 978 to 987 (CGSNSPSKRG) shows a compositional bias: polar residues. Residues 1021–1056 (PTEERIQKLEFMLDKLQNEIDQELEHNNSLVREEKE) are a coiled coil. A compositionally biased stretch (polar residues) spans 1126-1137 (QLIDSQPFSNIS). The disordered stretch occupies residues 1126–1147 (QLIDSQPFSNISDDLFGPSESV).

In terms of assembly, interacts with MSN.

It localises to the endoplasmic reticulum membrane. In terms of biological role, molecular tethering protein that connects endoplasmic reticulum and mitochondria membranes. PDZD8-dependent endoplasmic reticulum-mitochondria membrane tethering is essential for endoplasmic reticulum-mitochondria Ca(2+) transfer. In neurons, involved in the regulation of dendritic Ca(2+) dynamics by regulating mitochondrial Ca(2+) uptake in neurons. The chain is PDZ domain-containing protein 8 from Mus musculus (Mouse).